Consider the following 1132-residue polypeptide: Fas-binding factor 1 homolog (1132 aa).

3 disordered regions span residues 18 to 50 (DDLL…LQAS), 65 to 84 (AEDM…PQAV), and 89 to 570 (KEMD…QSYE). Over residues 35–46 (AGVSSGRARGSS) the composition is skewed to low complexity. Basic and acidic residues-rich tracts occupy residues 134–148 (APEK…DKKP) and 189–206 (GSER…EKDP). The span at 226 to 235 (TFEDDDDDMM) shows a compositional bias: acidic residues. 2 stretches are compositionally biased toward basic and acidic residues: residues 244–270 (QKGD…DELL) and 278–303 (ILER…PEKE). Composition is skewed to polar residues over residues 331–341 (RQSVSRFSAEN) and 388–410 (AKTS…SKPN). 2 stretches are compositionally biased toward low complexity: residues 458–480 (ATST…ADSS) and 511–520 (PSDPAASSPA). The span at 534–548 (TMPSTPLQAASQLQA) shows a compositional bias: polar residues. Coiled coils occupy residues 576–727 (RAAL…TSAT), 769–882 (ARQR…LAVE), and 918–1044 (LAKE…HKKL).

It localises to the cytoplasm. It is found in the cytoskeleton. The protein localises to the microtubule organizing center. The protein resides in the centrosome. Its subcellular location is the centriole. It localises to the spindle pole. It is found in the cell junction. Its function is as follows. Keratin-binding protein required for epithelial cell polarization. Required for ciliogenesis. In Gallus gallus (Chicken), this protein is Fas-binding factor 1 homolog (FBF1).